A 139-amino-acid polypeptide reads, in one-letter code: Ribulose bisphosphate carboxylase small subunit, plasmid (139 aa).

The protein belongs to the RuBisCO small chain family. Heterohexadecamer of 8 large and 8 small subunits.

Functionally, ruBisCO catalyzes two reactions: the carboxylation of D-ribulose 1,5-bisphosphate, the primary event in carbon dioxide fixation, as well as the oxidative fragmentation of the pentose substrate. Both reactions occur simultaneously and in competition at the same active site. Although the small subunit is not catalytic it is essential for maximal activity. In Cupriavidus necator (strain ATCC 17699 / DSM 428 / KCTC 22496 / NCIMB 10442 / H16 / Stanier 337) (Ralstonia eutropha), this protein is Ribulose bisphosphate carboxylase small subunit, plasmid.